The sequence spans 331 residues: UDP-GalNAc:beta-1,3-N-acetylgalactosaminyltransferase 1 (331 aa).

The Cytoplasmic segment spans residues 1–20 (MASALWTVLPSRMSLRSLKW). Residues 21 to 43 (SLLLLSLLSFFVMWYLSLPHYNV) traverse the membrane as a helical; Signal-anchor for type II membrane protein segment. Over 44–331 (IERVNWMYFY…VMLRNTTCHY (288 aa)) the chain is Lumenal. N-linked (GlcNAc...) asparagine glycosylation is found at Asn72, Asn154, Asn198, Asn212, and Asn326.

It belongs to the glycosyltransferase 31 family. It depends on Mg(2+) as a cofactor. Higher expression in heart and brain, and to a lesser extent in lung, placenta, kidney and testis. Lower expression in liver, spleen and stomach. No expression in skeletal muscle.

Its subcellular location is the golgi apparatus membrane. It carries out the reaction a globoside Gb3Cer (d18:1(4E)) + UDP-N-acetyl-alpha-D-galactosamine = a globoside Gb4Cer (d18:1(4E)) + UDP + H(+). The protein operates within protein modification; protein glycosylation. In terms of biological role, transfers N-acetylgalactosamine onto globotriaosylceramide. Plays a critical role in preimplantation stage embryonic development. This is UDP-GalNAc:beta-1,3-N-acetylgalactosaminyltransferase 1 from Homo sapiens (Human).